The following is a 631-amino-acid chain: ATP-dependent RNA helicase mrh4, mitochondrial (631 aa).

The transit peptide at 1–45 directs the protein to the mitochondrion; that stretch reads MNRLGRLPLPLPPSVCLFCQSRATTPLPPSLQATRSMATARLRRR. The disordered stretch occupies residues 68–111; the sequence is KERFGPFAGMNQTEARIRDKPRTRSRAAQKRSGEPEEDSQKESP. Residues 98–108 show a composition bias toward basic and acidic residues; that stretch reads RSGEPEEDSQK. A Q motif motif is present at residues 141–174; the sequence is TSFDQFQLLPVVRNSISSQALPGLVDVTPTPIQR. The segment covering 180 to 193 has biased composition (basic and acidic residues); that stretch reads LLEEPKTEKKPTKA. The disordered stretch occupies residues 180-199; sequence LLEEPKTEKKPTKADDDEPQ. The 213-residue stretch at 194 to 406 folds into the Helicase ATP-binding domain; it reads DDDEPQYDQY…RKRYPDIKRL (213 aa). 207 to 214 lines the ATP pocket; that stretch reads AETGSGKT. Residues 229 to 249 form a disordered region; the sequence is EARDKELEKKEQEEKAREREE. A DEAD box motif is present at residues 353 to 356; it reads DEAD. In terms of domain architecture, Helicase C-terminal spans 455 to 631; it reads GPYASYVAPK…EGMFRGQALI (177 aa).

The protein belongs to the DEAD box helicase family. MRH4 subfamily.

Its subcellular location is the mitochondrion. The enzyme catalyses ATP + H2O = ADP + phosphate + H(+). In terms of biological role, ATP-binding RNA helicase involved in mitochondrial RNA metabolism. Required for maintenance of mitochondrial DNA. The protein is ATP-dependent RNA helicase mrh4, mitochondrial (mrh4) of Neosartorya fischeri (strain ATCC 1020 / DSM 3700 / CBS 544.65 / FGSC A1164 / JCM 1740 / NRRL 181 / WB 181) (Aspergillus fischerianus).